Here is a 106-residue protein sequence, read N- to C-terminus: ATP-dependent Clp protease adapter protein ClpS (106 aa).

This sequence belongs to the ClpS family. As to quaternary structure, binds to the N-terminal domain of the chaperone ClpA.

Functionally, involved in the modulation of the specificity of the ClpAP-mediated ATP-dependent protein degradation. This is ATP-dependent Clp protease adapter protein ClpS from Cronobacter sakazakii (strain ATCC BAA-894) (Enterobacter sakazakii).